The primary structure comprises 339 residues: Protein RecA (339 aa).

73–80 contributes to the ATP binding site; sequence GPESSGKT.

It belongs to the RecA family.

Its subcellular location is the cytoplasm. In terms of biological role, can catalyze the hydrolysis of ATP in the presence of single-stranded DNA, the ATP-dependent uptake of single-stranded DNA by duplex DNA, and the ATP-dependent hybridization of homologous single-stranded DNAs. It interacts with LexA causing its activation and leading to its autocatalytic cleavage. The protein is Protein RecA of Mycoplasmopsis pulmonis (strain UAB CTIP) (Mycoplasma pulmonis).